The chain runs to 563 residues: Proton channel OTOP2 (563 aa).

The disordered stretch occupies residues 1–20 (MSEELVPHPNESLPGPRASP). Helical transmembrane passes span 30-50 (LLSV…ISGG), 62-82 (VFAL…FYLL), 100-120 (PIWL…MDVF), 137-157 (ILHP…LWIS), 173-193 (LMFT…DESV), 242-262 (FYLY…LYVM), 290-310 (FFAG…VFIL), 325-345 (ALVI…LVSL), 373-393 (LMGA…AVVV), 403-423 (LNLS…VFII), 496-516 (DISL…AFGA), and 528-548 (FYGY…GIFY).

This sequence belongs to the otopetrin family. Expressed at higher level in stomach, testis and olfactory bulb.

The protein localises to the cell membrane. The catalysed reaction is H(+)(in) = H(+)(out). Its activity is regulated as follows. Actives at neutral and alkaline extracellular pH, acid extracellular pH appears to inhibit the channel. Insensitive to activation by Zn(2+). In terms of biological role, proton-selective ion channel open at neutral pH. Actives at neutral and alkaline extracellular pH, likely participates in some alkali-related physiological activities. The sequence is that of Proton channel OTOP2 from Mus musculus (Mouse).